The sequence spans 134 residues: Mini-ribonuclease 3 (134 aa).

Residue aspartate 22 is part of the active site.

It belongs to the MrnC RNase family. As to quaternary structure, homodimer. Mg(2+) serves as cofactor.

The protein resides in the cytoplasm. Involved in correct processing of both the 5' and 3' ends of 23S rRNA precursor. Processes 30S rRNA precursor transcript even in absence of ribonuclease 3 (Rnc); Rnc processes 30S rRNA into smaller rRNA precursors. This is Mini-ribonuclease 3 from Staphylococcus aureus (strain NCTC 8325 / PS 47).